The primary structure comprises 323 residues: MIEFGNFYQLIAKNHLSHWLETLPAQIAAWQREQQHGLFKQWSNAVEFLPEITPWRLDLLHSVTAESETPLSEGQLKRIDTLLRNLMPWRKGPFSLYGVDIDTEWRSDWKWDRVLPHLSDLTGRTILDVGCGSGYHLWRMIGAGAHLAVGIDPTQLFLCQFEAVRKLLGNDQRAHLLPLGIEQLPALKAFDTVFSMGVLYHRRSPLEHLWQLKDQLVNEGELVLETLVVDGDENTVLVPGDRYAQMRNVYFIPSAPALKKWLEKCGFIDVRIADVCVTTTEEQRRTEWMVTESLADFLDPNDRSKTVEGYPAPQRAVLIARKP.

Carboxy-S-adenosyl-L-methionine contacts are provided by residues K91, W105, K110, G130, 152-154 (DPT), 181-182 (IE), M196, Y200, and R315.

Belongs to the class I-like SAM-binding methyltransferase superfamily. CmoB family. In terms of assembly, homotetramer.

The catalysed reaction is carboxy-S-adenosyl-L-methionine + 5-hydroxyuridine(34) in tRNA = 5-carboxymethoxyuridine(34) in tRNA + S-adenosyl-L-homocysteine + H(+). Its function is as follows. Catalyzes carboxymethyl transfer from carboxy-S-adenosyl-L-methionine (Cx-SAM) to 5-hydroxyuridine (ho5U) to form 5-carboxymethoxyuridine (cmo5U) at position 34 in tRNAs. The sequence is that of tRNA U34 carboxymethyltransferase from Salmonella agona (strain SL483).